The following is a 496-amino-acid chain: Angiopoietin-2 (496 aa).

The signal sequence occupies residues 1 to 18 (MWQIVFLTFGCDLVLASA). Asparagine 89, asparagine 119, asparagine 133, asparagine 151, asparagine 240, and asparagine 304 each carry an N-linked (GlcNAc...) asparagine glycan. Positions 159-256 (QLLQHSISTN…QQHDLMETVN (98 aa)) form a coiled coil. In terms of domain architecture, Fibrinogen C-terminal spans 280–496 (TFRDCAEIFK…TTMMIRPADF (217 aa)). Cysteine 284 and cysteine 313 are disulfide-bonded. Positions 429, 431, 433, and 435 each coordinate Ca(2+). Disulfide bonds link cysteine 433–cysteine 435 and cysteine 437–cysteine 450.

Interacts with TEK/TIE2, competing for the same binding site as ANGPT1. Interacts with ITGA5. Interacts with SVEP1/polydom. Interacts with THBD; this interaction significantly inhibits the generation of activated PC and TAFIa/CPB2 by the thrombin/thrombomodulin complex.

The protein resides in the secreted. In terms of biological role, binds to TEK/TIE2, competing for the ANGPT1 binding site, and modulating ANGPT1 signaling. Can induce tyrosine phosphorylation of TEK/TIE2 in the absence of ANGPT1. In the absence of angiogenic inducers, such as VEGF, ANGPT2-mediated loosening of cell-matrix contacts may induce endothelial cell apoptosis with consequent vascular regression. In concert with VEGF, it may facilitate endothelial cell migration and proliferation, thus serving as a permissive angiogenic signal. Involved in the regulation of lymphangiogenesis. In Rattus norvegicus (Rat), this protein is Angiopoietin-2 (Angpt2).